A 230-amino-acid chain; its full sequence is Large ribosomal subunit protein uL1 (230 aa).

Belongs to the universal ribosomal protein uL1 family. As to quaternary structure, part of the 50S ribosomal subunit.

In terms of biological role, binds directly to 23S rRNA. The L1 stalk is quite mobile in the ribosome, and is involved in E site tRNA release. Its function is as follows. Protein L1 is also a translational repressor protein, it controls the translation of the L11 operon by binding to its mRNA. This Staphylococcus aureus (strain N315) protein is Large ribosomal subunit protein uL1.